The primary structure comprises 83 residues: MGLLPLVKKLGFIIFLLVSASAFALCSAGRSSILIYSQEDDHPEVVERRIHEHERILRMNSRDYGHSSPKPKLVRPPFKLIPN.

Residues methionine 1–alanine 28 form the signal peptide. The tract at residues serine 61–asparagine 83 is disordered. Tyrosine 64 carries the sulfotyrosine modification. 2 positions are modified to hydroxyproline: proline 69 and proline 71.

Interacts with the specific receptor kinases GSO1 and GSO2. In terms of tissue distribution, expressed exclusively in the root stele.

Its function is as follows. Peptide hormone required for contiguous Casparian strip diffusion barrier formation in roots via the regulation of CASPs protein expression and distribution in a GSO1-GSO2 signaling pathway. The Casparian strip is required for ion homeostasis (e.g. iron and potassium ions). The chain is Protein CASPARIAN STRIP INTEGRITY FACTOR 2 from Arabidopsis thaliana (Mouse-ear cress).